Here is a 316-residue protein sequence, read N- to C-terminus: WSCD family member GA21586 (316 aa).

A helical transmembrane segment spans residues 8-28 (FFGVSATIIIYIGGVLFLSMN). N-linked (GlcNAc...) asparagine glycans are attached at residues asparagine 78, asparagine 150, asparagine 226, and asparagine 232.

Belongs to the WSCD family.

The protein resides in the membrane. The protein is WSCD family member GA21586 of Drosophila pseudoobscura pseudoobscura (Fruit fly).